The primary structure comprises 83 residues: Small ribosomal subunit protein bS20 (83 aa).

Belongs to the bacterial ribosomal protein bS20 family.

Binds directly to 16S ribosomal RNA. This Flavobacterium psychrophilum (strain ATCC 49511 / DSM 21280 / CIP 103535 / JIP02/86) protein is Small ribosomal subunit protein bS20.